Consider the following 540-residue polypeptide: Putative cysteine ligase BshC (540 aa).

Residues 455 to 491 (GKENLKRLIRVVNSFEEKVKQRHRKNNQVAIQQLQKI) are a coiled coil.

This sequence belongs to the BshC family.

Involved in bacillithiol (BSH) biosynthesis. May catalyze the last step of the pathway, the addition of cysteine to glucosamine malate (GlcN-Mal) to generate BSH. In Desulforamulus reducens (strain ATCC BAA-1160 / DSM 100696 / MI-1) (Desulfotomaculum reducens), this protein is Putative cysteine ligase BshC.